A 424-amino-acid chain; its full sequence is Na(+), Li(+), K(+)/H(+) antiporter (424 aa).

The next 12 helical transmembrane spans lie at 15–35, 42–62, 74–94, 105–125, 141–161, 165–185, 227–247, 274–294, 305–325, 327–347, 367–389, and 393–415; these read VGEF…AIYF, GLAG…NLFG, MLVS…LANS, VAFT…QAMI, FYTT…VLFF, FELL…LRFY, LLFV…DLVI, TSFG…TVVI, WVFF…PMTS, FWIF…VVGL, AASL…TAWF, and WTFI…MFHL.

This sequence belongs to the major facilitator superfamily.

The protein localises to the cell membrane. With respect to regulation, norfloxacin transport is inhibited by CCCP. Its function is as follows. Exhibits dual functions as a Na(+)(Li(+)/K(+))/H(+) antiporter and a multidrug efflux pump. Catalyzes the efflux of Na(+), Li(+) and K(+) in exchange for external protons. Shows a preference for Na(+), followed by K(+) and Li(+). Can also function as a multidrug efflux pump. Transports ethidium bromide and norfloxacin. This Planococcus maritimus protein is Na(+), Li(+), K(+)/H(+) antiporter.